Here is a 689-residue protein sequence, read N- to C-terminus: Glycine--tRNA ligase beta subunit (689 aa).

This sequence belongs to the class-II aminoacyl-tRNA synthetase family. In terms of assembly, tetramer of two alpha and two beta subunits.

It localises to the cytoplasm. The enzyme catalyses tRNA(Gly) + glycine + ATP = glycyl-tRNA(Gly) + AMP + diphosphate. This is Glycine--tRNA ligase beta subunit from Pectobacterium carotovorum subsp. carotovorum (strain PC1).